A 179-amino-acid chain; its full sequence is Alkyl hydroperoxide reductase AhpD (179 aa).

The active-site Proton donor is the C130. An intrachain disulfide couples C130 to C133. Residue C133 is the Cysteine sulfenic acid (-SOH) intermediate of the active site.

It belongs to the AhpD family. In terms of assembly, homotrimer.

The enzyme catalyses N(6)-[(R)-dihydrolipoyl]-L-lysyl-[lipoyl-carrier protein] + a hydroperoxide = N(6)-[(R)-lipoyl]-L-lysyl-[lipoyl-carrier protein] + an alcohol + H2O. Antioxidant protein with alkyl hydroperoxidase activity. Required for the reduction of the AhpC active site cysteine residues and for the regeneration of the AhpC enzyme activity. The sequence is that of Alkyl hydroperoxide reductase AhpD from Nocardia farcinica (strain IFM 10152).